The chain runs to 353 residues: Protein RecA (353 aa).

ATP is bound at residue 65–72 (GPESSGKT). Residues 334-345 (DAERAGAEREDN) show a composition bias toward basic and acidic residues. Residues 334-353 (DAERAGAEREDNAAADDENF) form a disordered region.

The protein belongs to the RecA family.

It localises to the cytoplasm. Its function is as follows. Can catalyze the hydrolysis of ATP in the presence of single-stranded DNA, the ATP-dependent uptake of single-stranded DNA by duplex DNA, and the ATP-dependent hybridization of homologous single-stranded DNAs. It interacts with LexA causing its activation and leading to its autocatalytic cleavage. This chain is Protein RecA, found in Edwardsiella ictaluri (strain 93-146).